The primary structure comprises 1184 residues: DNA-directed RNA polymerase subunit beta (1184 aa).

It belongs to the RNA polymerase beta chain family. The RNAP catalytic core consists of 2 alpha, 1 beta, 1 beta' and 1 omega subunit. When a sigma factor is associated with the core the holoenzyme is formed, which can initiate transcription.

It catalyses the reaction RNA(n) + a ribonucleoside 5'-triphosphate = RNA(n+1) + diphosphate. DNA-dependent RNA polymerase catalyzes the transcription of DNA into RNA using the four ribonucleoside triphosphates as substrates. The sequence is that of DNA-directed RNA polymerase subunit beta from Fusobacterium nucleatum subsp. nucleatum (strain ATCC 25586 / DSM 15643 / BCRC 10681 / CIP 101130 / JCM 8532 / KCTC 2640 / LMG 13131 / VPI 4355).